Here is a 309-residue protein sequence, read N- to C-terminus: tRNA dimethylallyltransferase (309 aa).

ATP is bound at residue 13 to 20 (GPTAVGKS). 15–20 (TAVGKS) provides a ligand contact to substrate.

It belongs to the IPP transferase family. In terms of assembly, monomer. Requires Mg(2+) as cofactor.

The catalysed reaction is adenosine(37) in tRNA + dimethylallyl diphosphate = N(6)-dimethylallyladenosine(37) in tRNA + diphosphate. Its function is as follows. Catalyzes the transfer of a dimethylallyl group onto the adenine at position 37 in tRNAs that read codons beginning with uridine, leading to the formation of N6-(dimethylallyl)adenosine (i(6)A). This is tRNA dimethylallyltransferase from Lacticaseibacillus paracasei (strain ATCC 334 / BCRC 17002 / CCUG 31169 / CIP 107868 / KCTC 3260 / NRRL B-441) (Lactobacillus paracasei).